A 255-amino-acid chain; its full sequence is NAD kinase (255 aa).

D44 (proton acceptor) is an active-site residue. NAD(+)-binding positions include 44–45, H49, 114–115, D144, A152, 155–160, and Q216; these read DG, NE, and SAYNLS.

This sequence belongs to the NAD kinase family. A divalent metal cation serves as cofactor.

It is found in the cytoplasm. It catalyses the reaction NAD(+) + ATP = ADP + NADP(+) + H(+). Functionally, involved in the regulation of the intracellular balance of NAD and NADP, and is a key enzyme in the biosynthesis of NADP. Catalyzes specifically the phosphorylation on 2'-hydroxyl of the adenosine moiety of NAD to yield NADP. The sequence is that of NAD kinase from Rickettsia felis (strain ATCC VR-1525 / URRWXCal2) (Rickettsia azadi).